The sequence spans 293 residues: AA9 family lytic polysaccharide monooxygenase E (293 aa).

A signal peptide spans 1–19 (MKGLLSVAALSLAVSEVSA). 2 residues coordinate Cu(2+): H20 and H90. A disulfide bridge connects residues C59 and C172. O2 is bound by residues H158 and Q167. Position 169 (Y169) interacts with Cu(2+). Positions 257 to 293 (CAVAKWGQCGGNGWTGCTTCAAGSTCNTQNAYYHQCV) constitute a CBM1 domain.

It belongs to the polysaccharide monooxygenase AA9 family. It depends on Cu(2+) as a cofactor.

The protein resides in the secreted. It carries out the reaction [(1-&gt;4)-beta-D-glucosyl]n+m + reduced acceptor + O2 = 4-dehydro-beta-D-glucosyl-[(1-&gt;4)-beta-D-glucosyl]n-1 + [(1-&gt;4)-beta-D-glucosyl]m + acceptor + H2O.. With respect to regulation, glucose dehydrogenase and aryl-alcohol quinone oxidoreductases regulate the oxidative degradation of cellulose since they can act as catalytically efficient electron donors for LPMO9E. Lytic polysaccharide monooxygenase (LPMO) that depolymerizes crystalline and amorphous polysaccharides via the oxidation of scissile alpha- or beta-(1-4)-glycosidic bonds, yielding only C1 oxidation products. Catalysis by LPMOs requires the reduction of the active-site copper from Cu(II) to Cu(I) by a reducing agent and H(2)O(2) or O(2) as a cosubstrate. Improves the progression of lytic enzymes in delignified miscanthus cell walls. This boosting effect dependents on the cellular type which indicates contrasted recalcitrance levels in plant tissues. This Podospora anserina (strain S / ATCC MYA-4624 / DSM 980 / FGSC 10383) (Pleurage anserina) protein is AA9 family lytic polysaccharide monooxygenase E.